Consider the following 225-residue polypeptide: Membrane protein LapB (225 aa).

The protein to H.influenzae HI_1119.

The protein localises to the cell membrane. This chain is Membrane protein LapB (lapB), found in Mannheimia haemolytica (Pasteurella haemolytica).